Here is a 124-residue protein sequence, read N- to C-terminus: UPF0337 protein blr1496 (124 aa).

Belongs to the UPF0337 (CsbD) family.

The protein is UPF0337 protein blr1496 of Bradyrhizobium diazoefficiens (strain JCM 10833 / BCRC 13528 / IAM 13628 / NBRC 14792 / USDA 110).